A 274-amino-acid polypeptide reads, in one-letter code: 2,3,4,5-tetrahydropyridine-2,6-dicarboxylate N-succinyltransferase (274 aa).

2 residues coordinate substrate: Arg106 and Asp143.

Belongs to the transferase hexapeptide repeat family. Homotrimer.

The protein resides in the cytoplasm. The enzyme catalyses (S)-2,3,4,5-tetrahydrodipicolinate + succinyl-CoA + H2O = (S)-2-succinylamino-6-oxoheptanedioate + CoA. The protein operates within amino-acid biosynthesis; L-lysine biosynthesis via DAP pathway; LL-2,6-diaminopimelate from (S)-tetrahydrodipicolinate (succinylase route): step 1/3. This chain is 2,3,4,5-tetrahydropyridine-2,6-dicarboxylate N-succinyltransferase, found in Rickettsia conorii (strain ATCC VR-613 / Malish 7).